We begin with the raw amino-acid sequence, 105 residues long: Large ribosomal subunit protein uL24 (105 aa).

Belongs to the universal ribosomal protein uL24 family. In terms of assembly, part of the 50S ribosomal subunit.

In terms of biological role, one of two assembly initiator proteins, it binds directly to the 5'-end of the 23S rRNA, where it nucleates assembly of the 50S subunit. One of the proteins that surrounds the polypeptide exit tunnel on the outside of the subunit. The sequence is that of Large ribosomal subunit protein uL24 from Thermotoga petrophila (strain ATCC BAA-488 / DSM 13995 / JCM 10881 / RKU-1).